Here is a 327-residue protein sequence, read N- to C-terminus: Olfactory receptor 9G4 (327 aa).

At 1–43 (MIFPSHDSQAFTSVDMEVGNCTILTEFILLGFSADSQWQPILF) the chain is on the extracellular side. A glycan (N-linked (GlcNAc...) asparagine) is linked at Asn-20. The helical transmembrane segment at 44–64 (GVFLMLYLITLSGNMTLVILI) threads the bilayer. Residues 65–71 (RTDSHLH) are Cytoplasmic-facing. A helical membrane pass occupies residues 72–92 (TPMYFFIGNLSFLDFWYTSVY). Over 93–113 (TPKILASCVSEDKRISLAGCG) the chain is Extracellular. A disulfide bond links Cys-112 and Cys-194. Residues 114-134 (AQLFFSCVVAYTECYLLAAMA) form a helical membrane-spanning segment. Residues 135–152 (YDRHAAICNPLLYSGTMS) are Cytoplasmic-facing. The helical transmembrane segment at 153–173 (TALCTGLVAGSYIGGFLNAIA) threads the bilayer. Residues 174-212 (HTANTFRLHFCGKNIIDHFFCDAPPLVKMSCTNTRVYEK) are Extracellular-facing. The chain crosses the membrane as a helical span at residues 213–233 (VLLGVVGFTVLSSILAILISY). At 234-252 (VNILLAILRIHSASGRHKA) the chain is on the cytoplasmic side. The chain crosses the membrane as a helical span at residues 253-273 (FSTCASHLISVMLFYGSLLFM). Over 274–286 (YSRPSSTYSLERD) the chain is Extracellular. A helical membrane pass occupies residues 287–307 (KVAALFYTVINPLLNPLIYSL). Over 308–327 (RNKDIKEAFRKATQTIQPQT) the chain is Cytoplasmic.

This sequence belongs to the G-protein coupled receptor 1 family.

Its subcellular location is the cell membrane. Its function is as follows. Odorant receptor. The chain is Olfactory receptor 9G4 (OR9G4) from Homo sapiens (Human).